The sequence spans 188 residues: dITP/XTP pyrophosphatase (188 aa).

7-12 (TGNIGK) serves as a coordination point for substrate. Residues Glu-36 and Asp-65 each contribute to the Mg(2+) site. Asp-65 serves as the catalytic Proton acceptor. Residues Ser-66, 141–144 (FGYD), Lys-164, and 169–170 (HR) each bind substrate.

This sequence belongs to the HAM1 NTPase family. As to quaternary structure, homodimer. Mg(2+) serves as cofactor.

It carries out the reaction XTP + H2O = XMP + diphosphate + H(+). It catalyses the reaction dITP + H2O = dIMP + diphosphate + H(+). The catalysed reaction is ITP + H2O = IMP + diphosphate + H(+). Its function is as follows. Pyrophosphatase that catalyzes the hydrolysis of nucleoside triphosphates to their monophosphate derivatives, with a high preference for the non-canonical purine nucleotides XTP (xanthosine triphosphate), dITP (deoxyinosine triphosphate) and ITP. Seems to function as a house-cleaning enzyme that removes non-canonical purine nucleotides from the nucleotide pool, thus preventing their incorporation into DNA/RNA and avoiding chromosomal lesions. The protein is dITP/XTP pyrophosphatase of Methanopyrus kandleri (strain AV19 / DSM 6324 / JCM 9639 / NBRC 100938).